A 541-amino-acid chain; its full sequence is L-ornithine N(5)-monooxygenase (541 aa).

Residues 50-58 (EKQPEFQWH) and Gln69 each bind FAD. A substrate-binding site is contributed by Lys74. NADP(+) is bound at residue 223-226 (SGQS). Substrate-binding positions include 269–272 (NEIF) and Asn300. 300–302 (NYS) contacts NADP(+). The disordered stretch occupies residues 430–474 (TEIPKGPDGSLFDASEEEATWRPASPITPASPSPPSTPTSSALSQ). 520–522 (SLL) contributes to the FAD binding site. Ser523 provides a ligand contact to substrate.

It belongs to the lysine N(6)-hydroxylase/L-ornithine N(5)-oxygenase family. As to quaternary structure, homotetramer. It depends on FAD as a cofactor.

It catalyses the reaction L-ornithine + NADPH + O2 = N(5)-hydroxy-L-ornithine + NADP(+) + H2O. The enzyme catalyses L-ornithine + NADH + O2 = N(5)-hydroxy-L-ornithine + NAD(+) + H2O. It functions in the pathway siderophore biosynthesis. Its function is as follows. L-ornithine N(5)-monooxygenase; part of the siderophore basidioferrin biosynthetic pathway. The biosynthesis of basidioferrin depends on the hydroxylation of ornithine to N(5)-hydroxyornithine, catalyzed by the monooxygenase SMO1. The second step, the acylation of N(5)-hydroxy-L-ornithine is catalyzed by a not yet identified N-acyltransferase. Finally, assembly of basidioferrin is catalyzed by the nonribosomal peptide synthase (NRPS) NPS2 via amide bond formation between three L-AHO molecules to release the linear L-AHO trimer. In Ceriporiopsis subvermispora (strain B) (White-rot fungus), this protein is L-ornithine N(5)-monooxygenase (SMO1).